Here is a 1584-residue protein sequence, read N- to C-terminus: Adhesion G protein-coupled receptor B1 (1584 aa).

The N-terminal stretch at Met-1–Ala-30 is a signal peptide. The Extracellular segment spans residues Ala-31–Ser-948. A glycan (N-linked (GlcNAc...) asparagine) is linked at Asn-64. The segment at Arg-146–Asp-167 is disordered. The 55-residue stretch at Thr-261 to Gly-315 folds into the TSP type-1 1 domain. 3 disulfide bridges follow: Cys-273–Cys-309, Cys-277–Cys-314, and Cys-288–Cys-299. The disordered stretch occupies residues Ala-313–Arg-335. A compositionally biased stretch (low complexity) spans Arg-319–Ser-329. 4 TSP type-1 domains span residues Asp-354–Pro-407, His-409–Pro-462, Asp-467–Pro-520, and Asp-522–Pro-575. 14 disulfides stabilise this stretch: Cys-366–Cys-400, Cys-370–Cys-406, Cys-381–Cys-390, Cys-421–Cys-456, Cys-425–Cys-461, Cys-436–Cys-446, Cys-479–Cys-514, Cys-483–Cys-519, Cys-494–Cys-504, Cys-534–Cys-569, Cys-538–Cys-574, Cys-549–Cys-559, Cys-581–Cys-616, and Cys-604–Cys-634. N-linked (GlcNAc...) asparagine glycosylation occurs at Asn-401. N-linked (GlcNAc...) asparagine glycosylation is present at Asn-607. Thr-609 bears the Phosphothreonine mark. Asn-692, Asn-844, Asn-877, and Asn-881 each carry an N-linked (GlcNAc...) asparagine glycan. A GAIN-B domain is found at Arg-760–Ala-939. Disulfide bonds link Cys-884–Cys-921 and Cys-909–Cys-923. A GPS region spans residues Cys-884–Ala-939. Residues Ser-927–Lys-943 form an N-terminal stalk following vasculostatin-120 cleavage which is not required for signaling activity region. A helical membrane pass occupies residues Val-949–Tyr-969. Residues Val-970–Arg-980 are Cytoplasmic-facing. Residues Ser-981–Gly-1001 traverse the membrane as a helical segment. The Extracellular portion of the chain corresponds to Gln-1002 to Lys-1008. A helical membrane pass occupies residues Val-1009–Val-1029. At Leu-1030 to Arg-1052 the chain is on the cytoplasmic side. The helical transmembrane segment at Phe-1053–Lys-1073 threads the bilayer. Topologically, residues Ala-1074–Tyr-1093 are extracellular. The chain crosses the membrane as a helical span at residues Ala-1094–Phe-1114. The Cytoplasmic segment spans residues Asn-1115–Leu-1136. A helical transmembrane segment spans residues Trp-1137–Val-1157. The Extracellular portion of the chain corresponds to Thr-1158–Gln-1166. A helical membrane pass occupies residues Ile-1167–Leu-1187. At Arg-1188–Val-1584 the chain is on the cytoplasmic side. The segment at Tyr-1365–Val-1584 is involved in interaction with MAGI1. Disordered stretches follow at residues Glu-1385–Ser-1475 and Arg-1501–Leu-1548. Residues Arg-1391–Leu-1439 are compositionally biased toward pro residues. Residues Thr-1453 to Ser-1469 are compositionally biased toward polar residues. Ser-1469 bears the Phosphoserine mark. Over residues Arg-1501–Lys-1522 the composition is skewed to basic and acidic residues. The segment at Gln-1581–Val-1584 is indispensable for interaction with MAGI1.

The protein belongs to the G-protein coupled receptor 2 family. LN-TM7 subfamily. As to quaternary structure, interacts with ELMO1 and DOCK. When bound to ELMO1 and DOCK1, acts as a module to promote apoptotic cell engulfment. Interacts with MDM2; the interaction results in inhibition of MDM2-mediated ubiquitination and degradation of DLG4/PSD95. Interacts with PARD3 and TIAM1; the interaction is required for correct dendritic. localization of PARD3 and TIAM1 and for dendritic spine formation. Interacts with MAGI1. Interacts with MAGI3. Interacts with BAIAP2. Interacts with PHYHIP. Interacts with DLG4 (via PDZ domain). Vasculostatin-120: Interacts with CD36. Vasculostatin-120: Interacts with ARRB2. Interacts with BAIAP3; this interaction is direct. In terms of processing, proteolytically cleaved to produce vasculostatin-40 and vasculostatin-120. Vasculostatin-40 is the major form and is produced through proteolytic cleavage by MMP14 between residues 321 and 329 with cleavage likely to be between Ser-326 and Leu-327. Post-translationally, ubiquitinated. As to expression, expressed in brain (at protein level). Expressed on mononuclear phagocytes and monocyte-derived macrophages in the gastric mucosa (at protein level). Expressed in normal pancreatic tissue but not in pancreatic tumor tissue. Reduced or no expression is observed in some glioblastomas.

The protein resides in the cell membrane. It is found in the cell projection. The protein localises to the phagocytic cup. Its subcellular location is the cell junction. It localises to the focal adhesion. The protein resides in the dendritic spine. It is found in the postsynaptic density. The protein localises to the secreted. Functionally, phosphatidylserine receptor which enhances the engulfment of apoptotic cells. Also mediates the binding and engulfment of Gram-negative bacteria. Stimulates production of reactive oxygen species by macrophages in response to Gram-negative bacteria, resulting in enhanced microbicidal macrophage activity. In the gastric mucosa, required for recognition and engulfment of apoptotic gastric epithelial cells. Promotes myoblast fusion. Activates the Rho pathway in a G-protein-dependent manner. Inhibits MDM2-mediated ubiquitination and degradation of DLG4/PSD95, promoting DLG4 stability and regulating synaptic plasticity. Required for the formation of dendritic spines by ensuring the correct localization of PARD3 and TIAM1. Potent inhibitor of angiogenesis in brain and may play a significant role as a mediator of the p53/TP53 signal in suppression of glioblastoma. Its function is as follows. Inhibits angiogenesis in a CD36-dependent manner. Inhibits angiogenesis. The polypeptide is Adhesion G protein-coupled receptor B1 (Homo sapiens (Human)).